A 117-amino-acid chain; its full sequence is Large ribosomal subunit protein eL34 (117 aa).

At Ser-12 the chain carries Phosphoserine. An N6-acetyllysine mark is found at Lys-36 and Lys-43. Lys-108 participates in a covalent cross-link: Glycyl lysine isopeptide (Lys-Gly) (interchain with G-Cter in SUMO2).

It belongs to the eukaryotic ribosomal protein eL34 family. In terms of assembly, component of the large ribosomal subunit.

Its subcellular location is the cytoplasm. The protein localises to the cytosol. It localises to the endoplasmic reticulum. In terms of biological role, component of the large ribosomal subunit. The ribosome is a large ribonucleoprotein complex responsible for the synthesis of proteins in the cell. This Sus scrofa (Pig) protein is Large ribosomal subunit protein eL34 (RPL34).